A 98-amino-acid polypeptide reads, in one-letter code: Putative septation protein SpoVG (98 aa).

The protein belongs to the SpoVG family.

Essential for sporulation. Interferes with or is a negative regulator of the pathway leading to asymmetric septation. In Bacillus pumilus (strain SAFR-032), this protein is Putative septation protein SpoVG.